The sequence spans 179 residues: uncharacterized protein (179 aa).

The stretch at 139–172 (IEDLGKYIKSDRIEKEALREELEKILNTLVKHLE) forms a coiled coil.

This is an uncharacterized protein from Methanocaldococcus jannaschii (strain ATCC 43067 / DSM 2661 / JAL-1 / JCM 10045 / NBRC 100440) (Methanococcus jannaschii).